A 581-amino-acid chain; its full sequence is Adenine deaminase (581 aa).

This sequence belongs to the metallo-dependent hydrolases superfamily. Adenine deaminase family. The cofactor is Mn(2+).

It carries out the reaction adenine + H2O + H(+) = hypoxanthine + NH4(+). The chain is Adenine deaminase from Brucella abortus (strain 2308).